The sequence spans 231 residues: ATP-dependent dethiobiotin synthetase BioD (231 aa).

Position 12–17 (12–17 (DVGKTV)) interacts with ATP. Thr16 lines the Mg(2+) pocket. The active site involves Lys37. Residue Thr41 coordinates substrate. Residues Asp50, 109–112 (EGAG), 170–171 (GS), and 200–202 (PAG) each bind ATP. Residues Asp50 and Glu109 each coordinate Mg(2+).

This sequence belongs to the dethiobiotin synthetase family. In terms of assembly, homodimer. The cofactor is Mg(2+).

It is found in the cytoplasm. It carries out the reaction (7R,8S)-7,8-diammoniononanoate + CO2 + ATP = (4R,5S)-dethiobiotin + ADP + phosphate + 3 H(+). Its pathway is cofactor biosynthesis; biotin biosynthesis; biotin from 7,8-diaminononanoate: step 1/2. In terms of biological role, catalyzes a mechanistically unusual reaction, the ATP-dependent insertion of CO2 between the N7 and N8 nitrogen atoms of 7,8-diaminopelargonic acid (DAPA, also called 7,8-diammoniononanoate) to form a ureido ring. This chain is ATP-dependent dethiobiotin synthetase BioD, found in Rhodococcus jostii (strain RHA1).